The sequence spans 114 residues: MSELGAKYQQLQNELEEFIVARQKLETQLQENKIVNEEFDQLEEDTPVYKLTGNVLLPVEQSEARTNVDKRLEFIETEITRCEKNIRDKQEELEKMRSELIKLNNTAASTGPGR.

At Ser-2 the chain carries N-acetylserine.

This sequence belongs to the prefoldin subunit beta family. As to quaternary structure, heterohexamer of two PFD-alpha type and four PFD-beta type subunits.

The protein localises to the nucleus. In terms of biological role, binds specifically to cytosolic chaperonin (c-CPN) and transfers target proteins to it. Binds to nascent polypeptide chain and promotes folding in an environment in which there are many competing pathways for nonnative proteins. In Saccharomyces cerevisiae (strain ATCC 204508 / S288c) (Baker's yeast), this protein is Prefoldin subunit 6 (YKE2).